Consider the following 323-residue polypeptide: Aspartate carbamoyltransferase catalytic subunit (323 aa).

Carbamoyl phosphate-binding residues include Arg-71 and Thr-72. Residue Lys-99 coordinates L-aspartate. Carbamoyl phosphate-binding residues include Arg-121, His-151, and Gln-154. L-aspartate contacts are provided by Arg-184 and Arg-239. Residues Gly-280 and Pro-281 each contribute to the carbamoyl phosphate site.

This sequence belongs to the aspartate/ornithine carbamoyltransferase superfamily. ATCase family. In terms of assembly, heterododecamer (2C3:3R2) of six catalytic PyrB chains organized as two trimers (C3), and six regulatory PyrI chains organized as three dimers (R2).

It carries out the reaction carbamoyl phosphate + L-aspartate = N-carbamoyl-L-aspartate + phosphate + H(+). It functions in the pathway pyrimidine metabolism; UMP biosynthesis via de novo pathway; (S)-dihydroorotate from bicarbonate: step 2/3. In terms of biological role, catalyzes the condensation of carbamoyl phosphate and aspartate to form carbamoyl aspartate and inorganic phosphate, the committed step in the de novo pyrimidine nucleotide biosynthesis pathway. This is Aspartate carbamoyltransferase catalytic subunit from Cupriavidus metallidurans (strain ATCC 43123 / DSM 2839 / NBRC 102507 / CH34) (Ralstonia metallidurans).